Here is a 362-residue protein sequence, read N- to C-terminus: MMKLQDFDYQLPQSRIAQSPCAKRDHARMMVLDRRIGSLEHRHFYDFPDFVRKGDVLVINDSKVIPARLSGRKETGSRIELLLLSRYSDSPAVPETDSTEWPFFRVGVEETWEALLKPGKRIRIGTSIFFDDHSRATVIERINEKKWLLTFNTALPFDLFLQRYGKAPLPPYIKREKKNAQMPEDRDRYQTIYARSPGSIAAPTAGFHFSEALFKTLRELEIVIAPVTLHVGFGTFTPIETEDVEDHVMEVESFSISPESSDKINSAERVIAVGTTSTRVLESAADEQGRVHPMSGQSRLFIYPGYRFKRVQALLTNFHLPKSSLFLLACAFAGKDRIQQAYATAIQEEYRFYSYGDCMLII.

This sequence belongs to the QueA family. As to quaternary structure, monomer.

Its subcellular location is the cytoplasm. The enzyme catalyses 7-aminomethyl-7-carbaguanosine(34) in tRNA + S-adenosyl-L-methionine = epoxyqueuosine(34) in tRNA + adenine + L-methionine + 2 H(+). It functions in the pathway tRNA modification; tRNA-queuosine biosynthesis. Functionally, transfers and isomerizes the ribose moiety from AdoMet to the 7-aminomethyl group of 7-deazaguanine (preQ1-tRNA) to give epoxyqueuosine (oQ-tRNA). This Syntrophus aciditrophicus (strain SB) protein is S-adenosylmethionine:tRNA ribosyltransferase-isomerase.